The chain runs to 36 residues: Glucagon (36 aa).

This sequence belongs to the glucagon family. In terms of tissue distribution, produced by the X-cells of the islets of pancreas.

The protein localises to the secreted. Its function is as follows. Promotes hydrolysis of glycogen and lipids, and raises the blood sugar level. The polypeptide is Glucagon (gcg) (Hydrolagus colliei (Spotted ratfish)).